The primary structure comprises 434 residues: Histidinol dehydrogenase (434 aa).

NAD(+) contacts are provided by tyrosine 130, glutamine 188, and asparagine 211. Residues serine 237, glutamine 259, and histidine 262 each contribute to the substrate site. Residues glutamine 259 and histidine 262 each coordinate Zn(2+). Residues glutamate 326 and histidine 327 each act as proton acceptor in the active site. 4 residues coordinate substrate: histidine 327, aspartate 360, glutamate 414, and histidine 419. Aspartate 360 provides a ligand contact to Zn(2+). Histidine 419 is a binding site for Zn(2+).

This sequence belongs to the histidinol dehydrogenase family. As to quaternary structure, homodimer. It depends on Zn(2+) as a cofactor.

The enzyme catalyses L-histidinol + 2 NAD(+) + H2O = L-histidine + 2 NADH + 3 H(+). It participates in amino-acid biosynthesis; L-histidine biosynthesis; L-histidine from 5-phospho-alpha-D-ribose 1-diphosphate: step 9/9. In terms of biological role, catalyzes the sequential NAD-dependent oxidations of L-histidinol to L-histidinaldehyde and then to L-histidine. This chain is Histidinol dehydrogenase, found in Shigella dysenteriae serotype 1 (strain Sd197).